We begin with the raw amino-acid sequence, 337 residues long: MEQPWPPPGPWSLPRAEGEAEEESDFDVFPSSPRCPQLPGGGAQMYSHGIELACQKQKEFVKSSVACKWNLAEAQQKLGSLALHNSESLDQEHAKAQTAVSELRQREEEWRQKEEALVQREKMCLWSTDAISKDVFNKSFINQDKRKDTEDEDKSESFMQKYEQKIRHFGMLSRWDDSQRFLSDHPYLVCEETAKYLILWCFHLEAEKKGALMEQIAHQAVVMQFIMEMAKNCNVDPRGCFRLFFQKAKAEEEGYFEAFKNELEAFKSRVRLYSQSQSFQPMTVQNHVPHSGVGSIGLLESLPQNPDYLQYSISTALCSLNSVVHKEDDEPKMMDTV.

Residues Met1 to Trp11 show a composition bias toward pro residues. The disordered stretch occupies residues Met1–Gly40. Residues Glu2–Met171 are self-association. Ser32 and Ser88 each carry phosphoserine. Residues His84–Lys122 are a coiled coil. The tract at residues Lys147–Gln277 is self-association and interaction with Hsp90. An interaction with Hsp70 region spans residues Lys267–Val337. Residues Ser278–Val337 form a required for interaction with STIP1 region.

The protein belongs to the CDC37 family. In terms of assembly, self-associates. Forms complexes with Hsp70 and Hsp90. Interacts with CDC37, FKBP4, PPID and STIP1. Expressed in brain, heart, kidney, liver, placenta and skeletal muscle.

It localises to the cytoplasm. Functionally, co-chaperone that binds to numerous proteins and promotes their interaction with Hsp70 and Hsp90. This chain is Hsp90 co-chaperone Cdc37-like 1 (CDC37L1), found in Homo sapiens (Human).